Reading from the N-terminus, the 118-residue chain is Non-specific lipid-transfer protein-like 1 (118 aa).

The SCP2 domain maps to 5-113; it reads SDVIFEEIKE…KLRTILDPKM (109 aa).

The chain is Non-specific lipid-transfer protein-like 1 (nlt-1) from Caenorhabditis elegans.